Here is a 60-residue protein sequence, read N- to C-terminus: DVEAGFIEFRDLLGHCRFRDCRHDREPGCALLKALDEGRIQPQRMASYRHILASLPEPEY.

To E.coli YjeQ and H.influenzae HI_1714.

This is an uncharacterized protein from Azotobacter vinelandii.